A 727-amino-acid chain; its full sequence is Ankyrin repeat domain-containing protein 6 (727 aa).

8 ANK repeats span residues 9–38, 41–70, 74–103, 107–136, 140–169, 173–202, 206–235, and 239–268; these read ALSERLLVAAYKGQTENVVQLINKGARVAV, HGRTPLHLAANKGHLPVVQILLKAGCDLDV, GDQTALHRATVVGNTEIIAALIHEGCALDR, DGNTALHEASWHGFSQSAKLLIKAGANVLA, AGNTALHLACQNSHSQSTRVLLLAGSRADL, AGDTCLHVAARYNHLSIIRLLLTAFCSVHE, AGDTALHVAAALNHKKVAKILLEAGADTTI, and AGQTPLETARYHNNPEVALLLTKAPQVLRF. The tract at residues 277-386 is disordered; it reads KRERLKEERR…HRCSSPPPPH (110 aa). Over residues 280-296 the composition is skewed to basic and acidic residues; the sequence is RLKEERRAQSVPRDEVA. The segment covering 298–312 has biased composition (polar residues); that stretch reads SKGSVSAGDTPSSEQ. Residues 314-324 show a composition bias toward basic and acidic residues; it reads VARKEEAREEF. A compositionally biased stretch (basic residues) spans 363–379; that stretch reads KNLHAHNHPKKRNRHRC. The stretch at 417-446 forms a coiled coil; it reads LINKLENQLEATVEEIKAELGSVQDKMNTK. The span at 548–557 shows a compositional bias: low complexity; sequence PAAASDSSPP. Disordered stretches follow at residues 548 to 586 and 601 to 657; these read PAAASDSSPPVVRPKEKALNSTATQRLQQELSSSDCTGS and NEAA…TGPH. Polar residues predominate over residues 566–584; sequence LNSTATQRLQQELSSSDCT. Basic residues predominate over residues 622–633; sequence KSGKSGPTRHRA. The stretch at 682 to 727 forms a coiled coil; that stretch reads WYERKIEEARSQANQKAQQDKATLKEHIKSLEEELAKLRTRVQKEN.

Interacts with AXN1, AXN2 and CSNK1E/CKI-epsilon.

In terms of biological role, recruits CKI-epsilon to the beta-catenin degradation complex that consists of AXN1 or AXN2 and GSK3-beta and allows efficient phosphorylation of beta-catenin, thereby inhibiting beta-catenin/Tcf signals. The sequence is that of Ankyrin repeat domain-containing protein 6 (ANKRD6) from Homo sapiens (Human).